We begin with the raw amino-acid sequence, 341 residues long: MATWRRDGRLTGGQRLLCAGLAGTLSLSLTAPLELATVLAQVGVVRGHARGPWATGHRVWRAEGLRALWKGNAVACLRLFPCSAVQLAAYRKFVVLFTDDLGHISQWSSIMAGSLAGMVSTIVTYPTDLIKTRLIMQNILEPSYRGLLHAFSTIYQQEGFLALYRGVSLTVVGALPFSAGSLLVYMNLEKIWNGPRDQFSLPQNFANVCLAAAVTQTLSFPFETVKRKMQAQSPYLPHSGGVDVHFSGAVDCFRQIVKAQGVLGLWNGLTANLLKIVPYFGIMFSTFEFCKRICLYQNGYILSPLSYKLTPGVDQSLQPQELRELKKFFKTRKPKPKKPTL.

3 Solcar repeats span residues 11–101 (TGGQ…TDDL), 105–185 (SQWS…LLVY), and 200–298 (SLPQ…LYQN). The next 6 membrane-spanning stretches (helical) occupy residues 16-36 (LLCA…LELA), 68-88 (LWKG…VQLA), 110-130 (IMAG…TDLI), 166-186 (GVSL…LVYM), 205-225 (FANV…FETV), and 262-282 (VLGL…YFGI).

The protein belongs to the mitochondrial carrier (TC 2.A.29) family.

Its subcellular location is the mitochondrion inner membrane. The protein is Solute carrier family 25 member 43 (SLC25A43) of Homo sapiens (Human).